Consider the following 235-residue polypeptide: Large ribosomal subunit protein uL1 (235 aa).

This sequence belongs to the universal ribosomal protein uL1 family. Part of the 50S ribosomal subunit.

In terms of biological role, binds directly to 23S rRNA. The L1 stalk is quite mobile in the ribosome, and is involved in E site tRNA release. Its function is as follows. Protein L1 is also a translational repressor protein, it controls the translation of the L11 operon by binding to its mRNA. The chain is Large ribosomal subunit protein uL1 from Prochlorococcus marinus (strain NATL1A).